A 72-amino-acid polypeptide reads, in one-letter code: Beta-defensin 104A (72 aa).

The N-terminal stretch at 1-22 (MRRLVLLLAISLLLYQDLPVRS) is a signal peptide. Intrachain disulfides connect C30-C57, C37-C51, and C41-C58.

It belongs to the beta-defensin family.

The protein resides in the secreted. In terms of biological role, has antimicrobial activity. This chain is Beta-defensin 104A (DEFB104A), found in Gorilla gorilla gorilla (Western lowland gorilla).